The sequence spans 343 residues: Twinfilin (343 aa).

2 consecutive ADF-H domains span residues 4-139 (QTGI…KHKI) and 177-312 (GINC…EELH). The segment at 317–343 (NLRPQFSKPKGPPSRGAKRLTKPQAVE) is disordered.

Belongs to the actin-binding proteins ADF family. Twinfilin subfamily. Interacts with G-actin; ADP-actin form.

The protein localises to the cytoplasm. It is found in the cytoskeleton. The protein resides in the cell cortex. Functionally, actin-binding protein involved in motile and morphological processes. Inhibits actin polymerization, likely by sequestering G-actin. The sequence is that of Twinfilin (twf) from Aedes aegypti (Yellowfever mosquito).